A 422-amino-acid polypeptide reads, in one-letter code: GPI mannosyltransferase 1 (422 aa).

The next 8 membrane-spanning stretches (helical) occupy residues 10-30, 82-102, 162-182, 216-236, 282-302, 327-347, 352-372, and 385-405; these read TTPL…YGIY, FPAF…WLIL, IILG…PAIV, LKFG…MFAI, IESF…PLAL, SQYF…SSFL, LGIF…QQGY, and GLWL…GVII.

It belongs to the PIGM family.

Its subcellular location is the endoplasmic reticulum membrane. The protein operates within glycolipid biosynthesis; glycosylphosphatidylinositol-anchor biosynthesis. Mannosyltransferase involved in glycosylphosphatidylinositol-anchor biosynthesis. Transfers the first alpha-1,4-mannose to GlcN-acyl-PI during GPI precursor assembly. Required for cell wall integrity. The sequence is that of GPI mannosyltransferase 1 (GPI14) from Gibberella zeae (strain ATCC MYA-4620 / CBS 123657 / FGSC 9075 / NRRL 31084 / PH-1) (Wheat head blight fungus).